Reading from the N-terminus, the 220-residue chain is uncharacterized protein (220 aa).

A helical transmembrane segment spans residues phenylalanine 20–isoleucine 42.

It is found in the membrane. This is an uncharacterized protein from Rickettsia prowazekii (strain Madrid E).